Here is a 467-residue protein sequence, read N- to C-terminus: Ribosomal protein uS12 methylthiotransferase RimO (467 aa).

The interval 1 to 27 (MTSNPPDLRPDLAPKPTFGTAPRPDQP) is disordered. The region spanning 27-137 (PTLGMVSLGC…VLDAVHAAVP (111 aa)) is the MTTase N-terminal domain. Residues Cys36, Cys72, Cys101, Cys168, Cys172, and Cys175 each contribute to the [4Fe-4S] cluster site. Residues 154–397 (LTPRHFSYLK…MEKAQAISEA (244 aa)) form the Radical SAM core domain. One can recognise a TRAM domain in the interval 400-467 (ASKVGQTLQV…GEYDLWGALR (68 aa)).

Belongs to the methylthiotransferase family. RimO subfamily. The cofactor is [4Fe-4S] cluster.

The protein resides in the cytoplasm. It catalyses the reaction L-aspartate(89)-[ribosomal protein uS12]-hydrogen + (sulfur carrier)-SH + AH2 + 2 S-adenosyl-L-methionine = 3-methylsulfanyl-L-aspartate(89)-[ribosomal protein uS12]-hydrogen + (sulfur carrier)-H + 5'-deoxyadenosine + L-methionine + A + S-adenosyl-L-homocysteine + 2 H(+). In terms of biological role, catalyzes the methylthiolation of an aspartic acid residue of ribosomal protein uS12. In Ruegeria sp. (strain TM1040) (Silicibacter sp.), this protein is Ribosomal protein uS12 methylthiotransferase RimO.